We begin with the raw amino-acid sequence, 247 residues long: UPF0259 membrane protein BU276 (247 aa).

6 consecutive transmembrane segments (helical) span residues 20–40, 85–105, 114–134, 137–157, 188–208, and 218–238; these read IGAI…IDMF, IMES…LISV, IVSS…LNFL, FIIQ…SIIL, IIGP…MLLA, and LFLI…IYLF.

This sequence belongs to the UPF0259 family.

The protein localises to the cell membrane. This chain is UPF0259 membrane protein BU276, found in Buchnera aphidicola subsp. Acyrthosiphon pisum (strain APS) (Acyrthosiphon pisum symbiotic bacterium).